The primary structure comprises 387 residues: Probable inactive shikimate kinase like 2, chloroplastic (387 aa).

The transit peptide at 1-71 directs the protein to the chloroplast; that stretch reads MAAFASGLAI…FNSFSCNCLS (71 aa). The interval 368 to 387 is disordered; sequence NIKPPGWDPSSDTGPHPQFT.

It belongs to the shikimate kinase family.

It is found in the plastid. The protein localises to the chloroplast. This Arabidopsis thaliana (Mouse-ear cress) protein is Probable inactive shikimate kinase like 2, chloroplastic (SKL2).